A 180-amino-acid chain; its full sequence is Ribosome maturation factor RimM (180 aa).

A PRC barrel domain is found at 108–180 (PDEYYWVDLE…LIVVDWDPDF (73 aa)).

Belongs to the RimM family. In terms of assembly, binds ribosomal protein uS19.

The protein resides in the cytoplasm. Functionally, an accessory protein needed during the final step in the assembly of 30S ribosomal subunit, possibly for assembly of the head region. Essential for efficient processing of 16S rRNA. May be needed both before and after RbfA during the maturation of 16S rRNA. It has affinity for free ribosomal 30S subunits but not for 70S ribosomes. The chain is Ribosome maturation factor RimM from Xanthomonas euvesicatoria pv. vesicatoria (strain 85-10) (Xanthomonas campestris pv. vesicatoria).